The following is a 292-amino-acid chain: tRNA (guanine-N(1)-)-methyltransferase (292 aa).

S-adenosyl-L-methionine is bound by residues G151 and 175-180; that span reads IGDYVL.

This sequence belongs to the RNA methyltransferase TrmD family. In terms of assembly, homodimer.

Its subcellular location is the cytoplasm. The catalysed reaction is guanosine(37) in tRNA + S-adenosyl-L-methionine = N(1)-methylguanosine(37) in tRNA + S-adenosyl-L-homocysteine + H(+). In terms of biological role, specifically methylates guanosine-37 in various tRNAs. This Corynebacterium diphtheriae (strain ATCC 700971 / NCTC 13129 / Biotype gravis) protein is tRNA (guanine-N(1)-)-methyltransferase.